The sequence spans 187 residues: MLLENGWLVDARHVPSPHHDCRPEDEKPTLLVVHNISLPPGEFGGPWIDALFTGTIDPDAHPFFAEIAHLALSADCLIRRDGEVVQYVPFDKRAWHAGVSMYQGRERCNDFSIGIELEGTDTTPYTDAQYEKLVAVTQTLIGRYPAIADNITGHSDIAPERKTDPGPAFDWSRFHAMLTTSSDKEIT.

One can recognise an N-acetylmuramoyl-L-alanine amidase domain in the interval 29-167; the sequence is TLLVVHNISL…APERKTDPGP (139 aa). His34 is a Zn(2+) binding site. The active-site Proton acceptor is Glu116. Residues His154 and Asp164 each coordinate Zn(2+).

The protein belongs to the N-acetylmuramoyl-L-alanine amidase 2 family. Zn(2+) serves as cofactor.

Its subcellular location is the cytoplasm. The enzyme catalyses Hydrolyzes the link between N-acetylmuramoyl residues and L-amino acid residues in certain cell-wall glycopeptides.. Functionally, involved in cell wall peptidoglycan recycling. Specifically cleaves the amide bond between the lactyl group of N-acetylmuramic acid and the alpha-amino group of the L-alanine in degradation products containing an anhydro N-acetylmuramyl moiety. This is 1,6-anhydro-N-acetylmuramyl-L-alanine amidase AmpD from Enterobacter cloacae.